The sequence spans 449 residues: Glucose-6-phosphate isomerase (449 aa).

The active-site Proton donor is glutamate 291. Residues histidine 312 and lysine 426 contribute to the active site.

Belongs to the GPI family.

Its subcellular location is the cytoplasm. It catalyses the reaction alpha-D-glucose 6-phosphate = beta-D-fructose 6-phosphate. Its pathway is carbohydrate biosynthesis; gluconeogenesis. It participates in carbohydrate degradation; glycolysis; D-glyceraldehyde 3-phosphate and glycerone phosphate from D-glucose: step 2/4. Catalyzes the reversible isomerization of glucose-6-phosphate to fructose-6-phosphate. The chain is Glucose-6-phosphate isomerase from Streptococcus pyogenes serotype M18 (strain MGAS8232).